A 259-amino-acid chain; its full sequence is Global transcriptional regulator CodY (259 aa).

The segment at 1-155 (MNLLEKTRKI…GATVVGMEIL (155 aa)) is GAF domain. The segment at residues 203–222 (ASKIADRVGITRSVIVNALR) is a DNA-binding region (H-T-H motif). Ser215 carries the phosphoserine modification.

This sequence belongs to the CodY family.

It localises to the cytoplasm. Functionally, DNA-binding global transcriptional regulator which is involved in the adaptive response to starvation and acts by directly or indirectly controlling the expression of numerous genes in response to nutrient availability. During rapid exponential growth, CodY is highly active and represses genes whose products allow adaptation to nutrient depletion. This chain is Global transcriptional regulator CodY, found in Geobacillus thermodenitrificans (strain NG80-2).